A 480-amino-acid polypeptide reads, in one-letter code: Probable cyclodipeptide synthase PUL1 (480 aa).

The protein operates within siderophore biosynthesis. In terms of biological role, probable cyclodipeptide synthase; part of the PUL gene cluster that mediates the formation of pulcherrimin, a red iron-containing pigment composed of two cyclized and modified leucine molecules that acts as a siderophore, a chelator that binds iron outside the cell for subsequent uptake. Two leucine molecules are cyclized via a cyclodipeptide synthase, and the resulting diketopiperazine is oxidized by a cytochrome P450 monooxygenase to generate pulcherriminic acid (PA), which can then spontaneously bind iron to form pulcherrimin. The probable cyclodipeptide synthase PUL1 and the cytochrome P450 monooxygenase PUL2 encode the enzymes responsible for the two-step pulcherrimin biosynthesis pathway. In Kluyveromyces lactis (strain ATCC 8585 / CBS 2359 / DSM 70799 / NBRC 1267 / NRRL Y-1140 / WM37) (Yeast), this protein is Probable cyclodipeptide synthase PUL1.